The primary structure comprises 334 residues: Dihydroorotate dehydrogenase (quinone) (334 aa).

Residues 59 to 63 (AGLDK) and threonine 83 each bind FMN. Position 63 (lysine 63) interacts with substrate. Substrate is bound at residue 108 to 112 (NRMGF). Asparagine 136 and asparagine 169 together coordinate FMN. Asparagine 169 contacts substrate. Serine 172 acts as the Nucleophile in catalysis. Asparagine 174 is a binding site for substrate. Positions 214 and 242 each coordinate FMN. A substrate-binding site is contributed by 243 to 244 (NT). Residues glycine 265, glycine 294, and 315 to 316 (YS) contribute to the FMN site.

This sequence belongs to the dihydroorotate dehydrogenase family. Type 2 subfamily. As to quaternary structure, monomer. FMN serves as cofactor.

The protein localises to the cell membrane. It catalyses the reaction (S)-dihydroorotate + a quinone = orotate + a quinol. Its pathway is pyrimidine metabolism; UMP biosynthesis via de novo pathway; orotate from (S)-dihydroorotate (quinone route): step 1/1. In terms of biological role, catalyzes the conversion of dihydroorotate to orotate with quinone as electron acceptor. In Acinetobacter baumannii (strain AB0057), this protein is Dihydroorotate dehydrogenase (quinone).